Here is a 462-residue protein sequence, read N- to C-terminus: GTPase Der (462 aa).

EngA-type G domains are found at residues 3–166 (PVIA…TTET) and 175–348 (IKIA…HSAI). Residues 9-16 (GRPNVGKS), 56-60 (DTGGI), 118-121 (NKTD), 181-188 (GRPNVGKS), 228-232 (DTAGV), and 293-296 (NKWD) contribute to the GTP site. The KH-like domain occupies 349 to 433 (QSFSTPKLTR…PLKIEFKGGQ (85 aa)).

This sequence belongs to the TRAFAC class TrmE-Era-EngA-EngB-Septin-like GTPase superfamily. EngA (Der) GTPase family. Associates with the 50S ribosomal subunit.

Functionally, GTPase that plays an essential role in the late steps of ribosome biogenesis. The polypeptide is GTPase Der (Legionella pneumophila (strain Paris)).